The chain runs to 597 residues: 66 kDa protein (597 aa).

Disordered stretches follow at residues 62–82 (VRLQSSPPRGPQSDRNLPSLQ), 160–198 (HSVPLSSEAPLQSSCSPRKLLHRPLSPPKPLHLHNFRQH), 218–315 (NQLA…SCRV), 329–411 (HFKS…LHHD), and 535–586 (SSPQ…ASAL). Residues 64–80 (LQSSPPRGPQSDRNLPS) are compositionally biased toward polar residues. Positions 218-234 (NQLAQAQQHPLPSSKPL) are enriched in polar residues. The span at 273–291 (PSSRGHLPSSTSSSSPRSN) shows a compositional bias: low complexity. The segment covering 305–315 (SNSQDLRSCRV) has biased composition (polar residues). The span at 389 to 400 (QTHHARLPHSKR) shows a compositional bias: basic residues. The segment covering 535–574 (SSPQSHSSESLRGDSPPSSHLPSSPSSACSGDSFASCSSF) has biased composition (low complexity). Residues 575–584 (GPSNPTSSAS) are compositionally biased toward polar residues.

It belongs to the tymoviridae protein p69 family.

In Ononis, this protein is 66 kDa protein.